A 118-amino-acid polypeptide reads, in one-letter code: Small ribosomal subunit protein uS13 (118 aa).

Positions 94–118 are disordered; the sequence is SLPVRGQRTKTNARTRKGPRKAIKK.

Belongs to the universal ribosomal protein uS13 family. As to quaternary structure, part of the 30S ribosomal subunit. Forms a loose heterodimer with protein S19. Forms two bridges to the 50S subunit in the 70S ribosome.

Located at the top of the head of the 30S subunit, it contacts several helices of the 16S rRNA. In the 70S ribosome it contacts the 23S rRNA (bridge B1a) and protein L5 of the 50S subunit (bridge B1b), connecting the 2 subunits; these bridges are implicated in subunit movement. Contacts the tRNAs in the A and P-sites. This Aeromonas hydrophila subsp. hydrophila (strain ATCC 7966 / DSM 30187 / BCRC 13018 / CCUG 14551 / JCM 1027 / KCTC 2358 / NCIMB 9240 / NCTC 8049) protein is Small ribosomal subunit protein uS13.